The primary structure comprises 159 residues: MLQTRLGLGALRQGRLLFAVKSFSTTSVAKIFPPPPQTIKGTVNDAAVFPHHSKLHGSYHWDFERIIAIAMVPQVMIPLFTGTSHPLMDAALACTLITHAHLGFESCVIDYFPARRFKKLSPLMHWILRGCTVLTLIGVYEFNTNDIGLTEGIKKLWKS.

Residues M1–K30 constitute a mitochondrion transit peptide. The Mitochondrial matrix portion of the chain corresponds to I31–R65. The chain crosses the membrane as a helical span at residues I66 to G82. Over T83–D89 the chain is Mitochondrial intermembrane. A helical membrane pass occupies residues A90–I109. H99 is a heme binding site. At D110–P122 the chain is on the mitochondrial matrix side. Y111 is a binding site for a ubiquinone. A helical transmembrane segment spans residues L123–Y140. Topologically, residues E141–S159 are mitochondrial intermembrane.

The protein belongs to the CybS family. Forms part of complex II containing four subunits: a flavoprotein (FP), an iron-sulfur protein (IP) and a cytochrome b composed of a large and a small subunit.

Its subcellular location is the mitochondrion inner membrane. The protein operates within carbohydrate metabolism; tricarboxylic acid cycle. Functionally, membrane-anchoring subunit of succinate dehydrogenase (SDH) that is involved in complex II of the mitochondrial electron transport chain and is responsible for transferring electrons from succinate to ubiquinone (coenzyme Q). This chain is Succinate dehydrogenase [ubiquinone] cytochrome b small subunit, mitochondrial (sdh4), found in Schizosaccharomyces pombe (strain 972 / ATCC 24843) (Fission yeast).